The chain runs to 210 residues: Large ribosomal subunit protein uL4 (210 aa).

The segment covering 41-52 has biased composition (polar residues); it reads MNNARQGTASSK. Positions 41–80 are disordered; it reads MNNARQGTASSKTRSEVRGGGRKPWRQKGTGRARAGSSRS. Residues 60-71 show a composition bias toward basic residues; that stretch reads GGRKPWRQKGTG.

This sequence belongs to the universal ribosomal protein uL4 family. Part of the 50S ribosomal subunit.

Functionally, one of the primary rRNA binding proteins, this protein initially binds near the 5'-end of the 23S rRNA. It is important during the early stages of 50S assembly. It makes multiple contacts with different domains of the 23S rRNA in the assembled 50S subunit and ribosome. Forms part of the polypeptide exit tunnel. The protein is Large ribosomal subunit protein uL4 of Acaryochloris marina (strain MBIC 11017).